Here is a 599-residue protein sequence, read N- to C-terminus: Flap endonuclease GEN-like 1 (599 aa).

Residues 1–96 form an N-domain region; it reads MGVGGNFWDL…ISRFFRSSGI (96 aa). The XPG-N domain stretch occupies residues 2 to 95; it reads GVGGNFWDLL…RISRFFRSSG (94 aa). Residues aspartate 31, aspartate 75, glutamate 140, glutamate 142, aspartate 161, aspartate 163, and aspartate 213 each contribute to the Mg(2+) site. Positions 128–213 are XPG-I domain; the sequence is ELLGIPVLKA…IAISLLVGND (86 aa). Positions 128–217 are I-domain; sequence ELLGIPVLKA…LLVGNDYDSG (90 aa). The 5'-3' exonuclease domain stretch occupies residues 213 to 407; that stretch reads DYDSGGVLGI…LLPMLSTIYL (195 aa). Disordered stretches follow at residues 522–545 and 559–599; these read RESK…MGVQ and AAGQ…LLFG. Polar residues-rich tracts occupy residues 563–572 and 580–590; these read SIETGGSSKA and ATSTSSSNLTK.

The protein belongs to the XPG/RAD2 endonuclease family. GEN subfamily. Mg(2+) is required as a cofactor.

The protein localises to the nucleus. Functionally, endonuclease which cleaves flap structures at the junction between single-stranded DNA and double-stranded DNA with a specific cleavage site in the 5' overhang strand exactly one nucleotide 3' of the branch point. Structure- and sequence-specific nuclease that resolves holliday junctions (HJs) by symmetrically oriented incisions in two opposing strands near the junction point, thus leading to ligatable products; HJs are physical links between homologous DNA molecules that arise as central intermediary structures during homologous recombination and repair in meiotic and somatic cells. Structure-specific nuclease with 5'-flap endonuclease activity, preferentially cleaving static flaps 5' overhang strand exactly one nucleotide in the 3' direction of the branch point. Also able to cleave double-stranded flap strand 1 exactly at the branch point. The polypeptide is Flap endonuclease GEN-like 1 (Arabidopsis thaliana (Mouse-ear cress)).